Consider the following 572-residue polypeptide: RNA polymerase sigma factor sigB (572 aa).

The transit peptide at M1 to Q39 directs the protein to the chloroplast. The interval T215–L249 is disordered. The Polymerase core binding motif lies at D360–A373. A DNA-binding region (H-T-H motif) is located at residues L530–S549.

Belongs to the sigma-70 factor family. As to expression, highly expressed in cotyledons, to a lesser extent in leaves, sepals and siliques, and barely expressed in roots. Present in seedlings.

The protein resides in the plastid. It localises to the chloroplast. In terms of biological role, required for the transition of plastids into chloroplasts by coordinating nuclear and chloroplastic genomes under light conditions. Sigma factors are initiation factors that promote the attachment of plastid-encoded RNA polymerase (PEP) to specific initiation sites and are then released. Promotes the biosynthesis of plastid-encoded tRNAs (e.g. trnE-UUC and trnV-UAC). In Arabidopsis thaliana (Mouse-ear cress), this protein is RNA polymerase sigma factor sigB (SIGB).